The sequence spans 548 residues: Tylosin resistance ATP-binding protein TlrC (548 aa).

2 ABC transporter domains span residues 9 to 265 (LSLH…RRRQ) and 347 to 547 (IATA…VSGA). ATP-binding positions include 41 to 48 (GDNGAGKS) and 387 to 394 (GPNGAGKS).

It belongs to the ABC transporter superfamily.

It is found in the cell membrane. Responsible for tylosin resistance, and is proposed to be a subunit of a multicomponent export system for the energy-dependent efflux of tylosin. In Streptomyces fradiae (Streptomyces roseoflavus), this protein is Tylosin resistance ATP-binding protein TlrC (tlrC).